The following is a 336-amino-acid chain: Ribosomal RNA large subunit methyltransferase F (336 aa).

Belongs to the methyltransferase superfamily. METTL16/RlmF family.

The protein resides in the cytoplasm. The catalysed reaction is adenosine(1618) in 23S rRNA + S-adenosyl-L-methionine = N(6)-methyladenosine(1618) in 23S rRNA + S-adenosyl-L-homocysteine + H(+). Functionally, specifically methylates the adenine in position 1618 of 23S rRNA. The sequence is that of Ribosomal RNA large subunit methyltransferase F from Yersinia pseudotuberculosis serotype I (strain IP32953).